The following is a 636-amino-acid chain: ABC transporter ATP-binding protein RamA (636 aa).

5 helical membrane passes run 45-65, 78-98, 175-195, 269-289, and 297-317; these read VLVL…PLAL, AGWW…LDSA, LVDV…ALLL, GVLV…RLAA, and LLAV…ASLL. In terms of domain architecture, ABC transmembrane type-1 spans 45–322; the sequence is VLVLLCSVAA…AASLLGAIVR (278 aa). Residues 354–585 enclose the ABC transporter domain; sequence LRLCGVRVLR…AGYREVFGAG (232 aa). 386-393 lines the ATP pocket; the sequence is GRSGAGKS. The segment covering 589–606 has biased composition (gly residues); that stretch reads GAGAGAGAGADAGAGADA. Positions 589–636 are disordered; the sequence is GAGAGAGAGADAGAGADAGPGPDSGAATAVGGSGPGPVRRPEPEEARP. Positions 607-618 are enriched in low complexity; sequence GPGPDSGAATAV. Positions 627-636 are enriched in basic and acidic residues; that stretch reads RRPEPEEARP.

This sequence belongs to the ABC transporter superfamily.

It is found in the cell membrane. Functionally, probably involved in exporting SapB from the cell. Expression of the ram locus (ramA, ramB and ramR) induces rapid aerial mycelium formation in S.lividans. The polypeptide is ABC transporter ATP-binding protein RamA (Streptomyces coelicolor (strain ATCC BAA-471 / A3(2) / M145)).